The following is an 80-amino-acid chain: Small ribosomal subunit protein uS17 (80 aa).

Belongs to the universal ribosomal protein uS17 family. Part of the 30S ribosomal subunit.

One of the primary rRNA binding proteins, it binds specifically to the 5'-end of 16S ribosomal RNA. This is Small ribosomal subunit protein uS17 from Chelativorans sp. (strain BNC1).